Reading from the N-terminus, the 405-residue chain is Argininosuccinate synthase (405 aa).

Residues 10-18 and Ala-37 each bind ATP; that span reads AYSGGLDTS. 2 residues coordinate L-citrulline: Tyr-88 and Ser-93. An ATP-binding site is contributed by Gly-118. 3 residues coordinate L-aspartate: Thr-120, Asn-124, and Asp-125. Asn-124 provides a ligand contact to L-citrulline. Arg-128, Ser-179, Ser-188, Glu-264, and Tyr-276 together coordinate L-citrulline.

Belongs to the argininosuccinate synthase family. Type 1 subfamily. In terms of assembly, homotetramer.

It is found in the cytoplasm. It carries out the reaction L-citrulline + L-aspartate + ATP = 2-(N(omega)-L-arginino)succinate + AMP + diphosphate + H(+). It participates in amino-acid biosynthesis; L-arginine biosynthesis; L-arginine from L-ornithine and carbamoyl phosphate: step 2/3. This is Argininosuccinate synthase from Ectopseudomonas mendocina (strain ymp) (Pseudomonas mendocina).